We begin with the raw amino-acid sequence, 182 residues long: MGLPPLSKIPLILRPQAWLHRRHYGEVLSPIRWWGRIPFIFYLVSMFVGWLERKRSPLDPVVRSLVSARIAQMCLCEFCVDITSMKVAERTGSSDKLLAVADWRQSPLFSDEERLALEYAEAASVTPPTVDDALRTRLAAHFDAQALTELTALIGLQNLSARFNSAMDIPAQGLCRIPEKRS.

To M.tuberculosis Rv2313c.

This is an uncharacterized protein from Escherichia coli (strain K12).